Consider the following 224-residue polypeptide: Holliday junction branch migration complex subunit RuvA (224 aa).

The tract at residues 1–64 (MIGKVAGILD…EDLLQLFGFP (64 aa)) is domain I. Residues 65–143 (TMIEKEWHRL…ALMAMGGGTA (79 aa)) form a domain II region. The disordered stretch occupies residues 141–185 (GTAALAPSEPPEPQPGTSSGSRRKTRAPEPPRPSHTADALSALAN). Residues 144 to 170 (ALAPSEPPEPQPGTSSGSRRKTRAPEP) are flexible linker. The segment at 171–224 (PRPSHTADALSALANLGYQPTDAAQAVAQAAGESPDADTAALIRAALKLLAPKS) is domain III.

The protein belongs to the RuvA family. As to quaternary structure, homotetramer. Forms an RuvA(8)-RuvB(12)-Holliday junction (HJ) complex. HJ DNA is sandwiched between 2 RuvA tetramers; dsDNA enters through RuvA and exits via RuvB. An RuvB hexamer assembles on each DNA strand where it exits the tetramer. Each RuvB hexamer is contacted by two RuvA subunits (via domain III) on 2 adjacent RuvB subunits; this complex drives branch migration. In the full resolvosome a probable DNA-RuvA(4)-RuvB(12)-RuvC(2) complex forms which resolves the HJ.

The protein localises to the cytoplasm. The RuvA-RuvB-RuvC complex processes Holliday junction (HJ) DNA during genetic recombination and DNA repair, while the RuvA-RuvB complex plays an important role in the rescue of blocked DNA replication forks via replication fork reversal (RFR). RuvA specifically binds to HJ cruciform DNA, conferring on it an open structure. The RuvB hexamer acts as an ATP-dependent pump, pulling dsDNA into and through the RuvAB complex. HJ branch migration allows RuvC to scan DNA until it finds its consensus sequence, where it cleaves and resolves the cruciform DNA. In Cereibacter sphaeroides (strain KD131 / KCTC 12085) (Rhodobacter sphaeroides), this protein is Holliday junction branch migration complex subunit RuvA.